Consider the following 35-residue polypeptide: Cupiennin-2b (35 aa).

Gln35 bears the Glutamine amide mark.

In terms of tissue distribution, expressed by the venom gland.

Its subcellular location is the secreted. The protein is Cupiennin-2b of Cupiennius salei (American wandering spider).